A 900-amino-acid chain; its full sequence is Probable 2-oxoadipate dehydrogenase complex component E1 homolog (900 aa).

It belongs to the alpha-ketoglutarate dehydrogenase family. The cofactor is thiamine diphosphate.

It localises to the mitochondrion. The catalysed reaction is N(6)-[(R)-lipoyl]-L-lysyl-[protein] + 2-oxoadipate + H(+) = N(6)-[(R)-S(8)-glutaryldihydrolipoyl]-L-lysyl-[protein] + CO2. Functionally, 2-oxoadipate dehydrogenase (E1a) component of the 2-oxoadipate dehydrogenase complex (OADHC). Participates in the first step, rate limiting for the overall conversion of 2-oxoadipate (alpha-ketoadipate) to glutaryl-CoA and CO(2) catalyzed by the whole OADHC. Catalyzes the irreversible decarboxylation of 2-oxoadipate via the thiamine diphosphate (ThDP) cofactor and subsequent transfer of the decarboxylated acyl intermediate on an oxidized dihydrolipoyl group that is covalently amidated to the E2 enzyme (dihydrolipoyllysine-residue succinyltransferase or DLST). The sequence is that of Probable 2-oxoadipate dehydrogenase complex component E1 homolog (odhA) from Dictyostelium discoideum (Social amoeba).